The primary structure comprises 164 residues: Putative histone H2B type 2-D (164 aa).

Positions 1–12 (MPEPAKFAPAPK) are enriched in low complexity. The disordered stretch occupies residues 1–33 (MPEPAKFAPAPKKGSKKAVTKAQKKDGKKRKRS). Pro-2 bears the N-acetylproline mark. At Lys-6 the chain carries N6-(2-hydroxyisobutyryl)lysine; alternate. 2 positions are modified to N6-(beta-hydroxybutyryl)lysine; alternate: Lys-6 and Lys-12. 3 positions are modified to N6-acetyllysine; alternate: Lys-6, Lys-12, and Lys-13. An N6-butyryllysine; alternate modification is found at Lys-6. Residues Lys-6, Lys-12, and Lys-13 each carry the N6-crotonyllysine; alternate modification. Residues Lys-6 and Lys-12 each carry the N6-lactoyllysine; alternate modification. Residue Lys-6 forms a Glycyl lysine isopeptide (Lys-Gly) (interchain with G-Cter in SUMO2); alternate linkage. An N6-(2-hydroxyisobutyryl)lysine; alternate modification is found at Lys-13. Ser-15 carries the post-translational modification Phosphoserine; by STK4/MST1. Lys-16, Lys-17, Lys-21, and Lys-24 each carry N6-acetyllysine; alternate. N6-crotonyllysine; alternate is present on residues Lys-16, Lys-17, Lys-21, and Lys-24. Residues Lys-16, Lys-17, Lys-21, and Lys-24 each carry the N6-lactoyllysine; alternate modification. N6-(beta-hydroxybutyryl)lysine; alternate occurs at positions 17 and 21. The residue at position 17 (Lys-17) is an N6-glutaryllysine; alternate. N6-(2-hydroxyisobutyryl)lysine; alternate is present on residues Lys-21 and Lys-24. N6-butyryllysine; alternate is present on Lys-21. Residue Lys-21 forms a Glycyl lysine isopeptide (Lys-Gly) (interchain with G-Cter in SUMO2); alternate linkage. Lys-25 is subject to N6-(2-hydroxyisobutyryl)lysine. Lys-35 bears the N6-(2-hydroxyisobutyryl)lysine; alternate mark. At Lys-35 the chain carries N6-(beta-hydroxybutyryl)lysine; alternate. An N6-crotonyllysine; alternate modification is found at Lys-35. Lys-35 carries the N6-glutaryllysine; alternate modification. Lys-35 carries the N6-succinyllysine; alternate modification. Lys-35 is covalently cross-linked (Glycyl lysine isopeptide (Lys-Gly) (interchain with G-Cter in ubiquitin); alternate). Ser-37 is subject to Phosphoserine; by AMPK. N6-(2-hydroxyisobutyryl)lysine; alternate is present on residues Lys-44, Lys-47, and Lys-58. Lys-44 carries the post-translational modification N6-lactoyllysine; alternate. Residues Lys-44 and Lys-47 each carry the N6-glutaryllysine; alternate modification. Residue Lys-47 is modified to N6-methyllysine; alternate. N6,N6-dimethyllysine; alternate is present on Lys-58. Position 80 is a dimethylated arginine (Arg-80). At Lys-86 the chain carries N6-(2-hydroxyisobutyryl)lysine; alternate. Lys-86 carries the N6-(beta-hydroxybutyryl)lysine; alternate modification. Lys-86 carries the post-translational modification N6-acetyllysine; alternate. Lys-86 carries the post-translational modification N6-lactoyllysine; alternate. Lys-86 is subject to N6,N6,N6-trimethyllysine; alternate. 2 positions are modified to omega-N-methylarginine: Arg-87 and Arg-93. The disordered stretch occupies residues 111-140 (PCPRAPRRSPSTPAPSESLPGPGARSLPPS).

It belongs to the histone H2B family. As to quaternary structure, the nucleosome is a histone octamer containing two molecules each of H2A, H2B, H3 and H4 assembled in one H3-H4 heterotetramer and two H2A-H2B heterodimers. The octamer wraps approximately 147 bp of DNA. In terms of processing, phosphorylation at Ser-37 (H2BS36ph) by AMPK in response to stress promotes transcription. Phosphorylated on Ser-15 (H2BS14ph) by STK4/MST1 during apoptosis; which facilitates apoptotic chromatin condensation. Also phosphorylated on Ser-15 in response to DNA double strand breaks (DSBs), and in correlation with somatic hypermutation and immunoglobulin class-switch recombination. Post-translationally, crotonylation (Kcr) is specifically present in male germ cells and marks testis-specific genes in post-meiotic cells, including X-linked genes that escape sex chromosome inactivation in haploid cells. Crotonylation marks active promoters and enhancers and confers resistance to transcriptional repressors. It is also associated with post-meiotically activated genes on autosomes. Lactylated in macrophages by EP300/P300 by using lactoyl-CoA directly derived from endogenous or exogenous lactate, leading to stimulates gene transcription.

The protein resides in the nucleus. It localises to the chromosome. Core component of nucleosome. Nucleosomes wrap and compact DNA into chromatin, limiting DNA accessibility to the cellular machineries which require DNA as a template. Histones thereby play a central role in transcription regulation, DNA repair, DNA replication and chromosomal stability. DNA accessibility is regulated via a complex set of post-translational modifications of histones, also called histone code, and nucleosome remodeling. The polypeptide is Putative histone H2B type 2-D (Homo sapiens (Human)).